Reading from the N-terminus, the 213-residue chain is Pyrrolidone-carboxylate peptidase (213 aa).

Catalysis depends on residues Glu80, Cys143, and His165.

The protein belongs to the peptidase C15 family. As to quaternary structure, homotetramer.

Its subcellular location is the cytoplasm. The enzyme catalyses Release of an N-terminal pyroglutamyl group from a polypeptide, the second amino acid generally not being Pro.. Its function is as follows. Removes 5-oxoproline from various penultimate amino acid residues except L-proline. The protein is Pyrrolidone-carboxylate peptidase of Erwinia tasmaniensis (strain DSM 17950 / CFBP 7177 / CIP 109463 / NCPPB 4357 / Et1/99).